The primary structure comprises 297 residues: Oxidoreductase R1 (297 aa).

Belongs to the asaB hydroxylase/desaturase family.

It participates in secondary metabolite biosynthesis. Functionally, oxidoreductase; part of the gene cluster that mediates the biosynthesis of squalestatin S1 (SQS1, also known as zaragozic acid A), a heavily oxidized fungal polyketide that offers potent cholesterol lowering activity by targeting squalene synthase (SS). SQS1 is composed of a 2,8-dioxobicyclic[3.2.1]octane-3,4,5-tricarboxyclic acid core that is connected to two lipophilic polyketide arms. These initial steps feature the priming of an unusual benzoic acid starter unit onto the highly reducing polyketide synthase pks2, followed by oxaloacetate extension and product release to generate a tricarboxylic acid containing product. The phenylalanine ammonia lyase (PAL) M7 and the acyl-CoA ligase M9 are involved in transforming phenylalanine into benzoyl-CoA. The citrate synthase-like protein R3 is involved in connecting the C-alpha-carbons of the hexaketide chain and oxaloacetate to afford the tricarboxylic acid unit. The potential hydrolytic enzymes, M8 and M10, are in close proximity to pks2 and may participate in product release. On the other side, the tetraketide arm is synthesized by a the squalestatin tetraketide synthase pks1 and enzymatically esterified to the core in the last biosynthetic step, by the acetyltransferase M4. The biosynthesis of the tetraketide must involve 3 rounds of chain extension. After the first and second rounds methyl-transfer occurs, and in all rounds of extension the ketoreductase and dehydratase are active. The enoyl reductase and C-MeT of pks1 are not active in the final round of extension. The acetyltransferase M4 appears to have a broad substrate selectivity for its acyl CoA substrate, allowing the in vitro synthesis of novel squalestatins. The biosynthesis of SQS1 requires several oxidative steps likely performed by oxidoreductases M1, R1 and R2. Finally, in support of the identification of the cluster as being responsible for SQS1 production, the cluster contains a gene encoding a putative squalene synthase (SS) R6, suggesting a likely mechanism for self-resistance. The polypeptide is Oxidoreductase R1 (Phoma sp. (strain ATCC 20986 / MF5453)).